Consider the following 425-residue polypeptide: Adenylosuccinate synthetase (425 aa).

GTP is bound by residues 12-18 (GDEGKGK) and 40-42 (GHT). Asp-13 (proton acceptor) is an active-site residue. Positions 13 and 40 each coordinate Mg(2+). IMP contacts are provided by residues 13 to 16 (DEGK), 38 to 41 (NAGH), Thr-130, Arg-144, Gln-224, Thr-239, and Arg-301. Residue His-41 is the Proton donor of the active site. 297 to 303 (TVSNRRR) serves as a coordination point for substrate. Residues Arg-303, 329-331 (KLD), and 411-413 (STS) contribute to the GTP site.

The protein belongs to the adenylosuccinate synthetase family. In terms of assembly, homodimer. Requires Mg(2+) as cofactor.

The protein resides in the cytoplasm. The enzyme catalyses IMP + L-aspartate + GTP = N(6)-(1,2-dicarboxyethyl)-AMP + GDP + phosphate + 2 H(+). It functions in the pathway purine metabolism; AMP biosynthesis via de novo pathway; AMP from IMP: step 1/2. Its function is as follows. Plays an important role in the de novo pathway of purine nucleotide biosynthesis. Catalyzes the first committed step in the biosynthesis of AMP from IMP. The polypeptide is Adenylosuccinate synthetase (Wolbachia sp. subsp. Drosophila simulans (strain wRi)).